Here is a 118-residue protein sequence, read N- to C-terminus: V-type proton ATPase subunit G 1 (118 aa).

The residue at position 2 (alanine 2) is an N-acetylalanine. Residues 25 to 90 are disordered; it reads ARKRKARRLK…VQGMQSSQQR (66 aa). The segment covering 35–56 has biased composition (basic and acidic residues); that stretch reads QAKEEAQMEVEQYRREREHEFQ. Composition is skewed to polar residues over residues 57-69 and 78-89; these read SKQQAAMGSQGNL and RHQVQGMQSSQQ.

This sequence belongs to the V-ATPase G subunit family. In terms of assembly, V-ATPase is a heteromultimeric enzyme made up of two complexes: the ATP-hydrolytic V1 complex and the proton translocation V0 complex. The V1 complex consists of three catalytic AB heterodimers that form a heterohexamer, three peripheral stalks each consisting of EG heterodimers, one central rotor including subunits D and F, and the regulatory subunits C and H. The proton translocation complex V0 consists of the proton transport subunit a, a ring of proteolipid subunits c9c'', rotary subunit d, subunits e and f, and the accessory subunits ATP6AP1/Ac45 and ATP6AP2/PRR.

It localises to the apical cell membrane. Functionally, subunit of the V1 complex of vacuolar(H+)-ATPase (V-ATPase), a multisubunit enzyme composed of a peripheral complex (V1) that hydrolyzes ATP and a membrane integral complex (V0) that translocates protons. V-ATPase is responsible for acidifying and maintaining the pH of intracellular compartments and in some cell types, is targeted to the plasma membrane, where it is responsible for acidifying the extracellular environment. In aerobic conditions, involved in intracellular iron homeostasis, thus triggering the activity of Fe(2+) prolyl hydroxylase (PHD) enzymes, and leading to HIF1A hydroxylation and subsequent proteasomal degradation. The polypeptide is V-type proton ATPase subunit G 1 (ATP6V1G1) (Pan troglodytes (Chimpanzee)).